The sequence spans 294 residues: Acetylglutamate kinase (294 aa).

Substrate is bound by residues glycine 69 to glycine 70, arginine 91, and asparagine 190.

The protein belongs to the acetylglutamate kinase family. ArgB subfamily.

Its subcellular location is the cytoplasm. The enzyme catalyses N-acetyl-L-glutamate + ATP = N-acetyl-L-glutamyl 5-phosphate + ADP. The protein operates within amino-acid biosynthesis; L-arginine biosynthesis; N(2)-acetyl-L-ornithine from L-glutamate: step 2/4. Catalyzes the ATP-dependent phosphorylation of N-acetyl-L-glutamate. This chain is Acetylglutamate kinase, found in Mycobacterium bovis (strain ATCC BAA-935 / AF2122/97).